A 223-amino-acid chain; its full sequence is Ubiquinone biosynthesis protein COQ4 homolog 2, mitochondrial (223 aa).

The transit peptide at 1–26 (MFLRRVHPVRLGHAIQRSLTTTKSRN) directs the protein to the mitochondrion. A compositionally biased stretch (low complexity) spans 21–32 (TTKSRNESTTTT). The segment at 21 to 43 (TTKSRNESTTTTVEAPQAVPSPP) is disordered. Zn(2+)-binding residues include H177, D178, H181, and E193.

The protein belongs to the COQ4 family. As to quaternary structure, component of a multi-subunit COQ enzyme complex. Zn(2+) serves as cofactor.

Its subcellular location is the mitochondrion inner membrane. The enzyme catalyses a 4-hydroxy-3-methoxy-5-(all-trans-polyprenyl)benzoate + H(+) = a 2-methoxy-6-(all-trans-polyprenyl)phenol + CO2. It functions in the pathway cofactor biosynthesis; ubiquinone biosynthesis. Functionally, lyase that catalyzes the C1-decarboxylation of 4-hydroxy-3-methoxy-5-(all-trans-polyprenyl)benzoic acid into 2-methoxy-6-(all-trans-polyprenyl)phenol during ubiquinone biosynthesis. The sequence is that of Ubiquinone biosynthesis protein COQ4 homolog 2, mitochondrial from Culex quinquefasciatus (Southern house mosquito).